A 65-amino-acid polypeptide reads, in one-letter code: Prokaryotic ubiquitin-like protein Pup (65 aa).

Basic and acidic residues predominate over residues 1 to 14 (MSGHEQQRPSRREE). Residues 1 to 35 (MSGHEQQRPSRREEDVEETPVVPAQAGAQAKESDA) form a disordered region. Residues 21–59 (VVPAQAGAQAKESDADVDALLDEIDEVLESNSEEFVRGF) are ARC ATPase binding. Residues 26–49 (AGAQAKESDADVDALLDEIDEVLE) adopt a coiled-coil conformation. Gln-65 bears the Deamidated glutamine mark. Gln-65 is covalently cross-linked (Isoglutamyl lysine isopeptide (Gln-Lys) (interchain with K-? in acceptor proteins)).

This sequence belongs to the prokaryotic ubiquitin-like protein family. As to quaternary structure, strongly interacts with the proteasome-associated ATPase ARC through a hydrophobic interface; the interacting region of Pup lies in its C-terminal half. There is one Pup binding site per ARC hexamer ring. Post-translationally, is modified by deamidation of its C-terminal glutamine to glutamate by the deamidase Dop, a prerequisite to the subsequent pupylation process.

It participates in protein degradation; proteasomal Pup-dependent pathway. In terms of biological role, protein modifier that is covalently attached to lysine residues of substrate proteins, thereby targeting them for proteasomal degradation. The tagging system is termed pupylation. This chain is Prokaryotic ubiquitin-like protein Pup, found in Kineococcus radiotolerans (strain ATCC BAA-149 / DSM 14245 / SRS30216).